The primary structure comprises 394 residues: Mitogen-activated protein kinase homolog D5 (394 aa).

Residues 62-347 (RPPIMPIGKG…VENALAHPYL (286 aa)) enclose the Protein kinase domain. Residues 68-76 (IGKGAYGIV) and lysine 91 contribute to the ATP site. Catalysis depends on aspartate 188, which acts as the Proton acceptor. Threonine 220 carries the post-translational modification Phosphothreonine. The TXY motif lies at 220-222 (TEY). Tyrosine 222 carries the post-translational modification Phosphotyrosine.

This sequence belongs to the protein kinase superfamily. CMGC Ser/Thr protein kinase family. MAP kinase subfamily. It depends on Mg(2+) as a cofactor. Post-translationally, dually phosphorylated on Thr-220 and Tyr-222, which activates the enzyme. As to expression, leaves, roots, root apices, and dormant and growing axillary buds.

The catalysed reaction is L-seryl-[protein] + ATP = O-phospho-L-seryl-[protein] + ADP + H(+). It carries out the reaction L-threonyl-[protein] + ATP = O-phospho-L-threonyl-[protein] + ADP + H(+). Activated by tyrosine and threonine phosphorylation. This is Mitogen-activated protein kinase homolog D5 from Pisum sativum (Garden pea).